The following is a 348-amino-acid chain: Pyruvate dehydrogenase E1 component subunit alpha (348 aa).

Positions 1-21 are disordered; sequence MAPRKSASVSSRKTAAKPAKK.

As to quaternary structure, heterodimer of an alpha and a beta chain. Requires thiamine diphosphate as cofactor.

The catalysed reaction is N(6)-[(R)-lipoyl]-L-lysyl-[protein] + pyruvate + H(+) = N(6)-[(R)-S(8)-acetyldihydrolipoyl]-L-lysyl-[protein] + CO2. Its function is as follows. The pyruvate dehydrogenase complex catalyzes the overall conversion of pyruvate to acetyl-CoA and CO(2). It contains multiple copies of three enzymatic components: pyruvate dehydrogenase (E1), dihydrolipoamide acetyltransferase (E2) and lipoamide dehydrogenase (E3). The protein is Pyruvate dehydrogenase E1 component subunit alpha (pdhA) of Rhizobium meliloti (strain 1021) (Ensifer meliloti).